The sequence spans 385 residues: Chaperone protein DnaJ 2 (385 aa).

The J domain occupies 10–75; the sequence is DYYKELGVSS…AKRKEYDETR (66 aa). A CR-type zinc finger spans residues 155–233; sequence GVTVPLRMTS…CHGSGIQNRT (79 aa). The Zn(2+) site is built by Cys168, Cys171, Cys185, Cys188, Cys207, Cys210, Cys221, and Cys224. CXXCXGXG motif repeat units lie at residues 168–175, 185–192, 207–214, and 221–228; these read CTTCHGSG, CPICNGTG, CDGCRGTG, and CVDCHGSG.

It belongs to the DnaJ family. Homodimer. The cofactor is Zn(2+).

The protein localises to the cytoplasm. Its function is as follows. Participates actively in the response to hyperosmotic and heat shock by preventing the aggregation of stress-denatured proteins and by disaggregating proteins, also in an autonomous, DnaK-independent fashion. Unfolded proteins bind initially to DnaJ; upon interaction with the DnaJ-bound protein, DnaK hydrolyzes its bound ATP, resulting in the formation of a stable complex. GrpE releases ADP from DnaK; ATP binding to DnaK triggers the release of the substrate protein, thus completing the reaction cycle. Several rounds of ATP-dependent interactions between DnaJ, DnaK and GrpE are required for fully efficient folding. Also involved, together with DnaK and GrpE, in the DNA replication of plasmids through activation of initiation proteins. The chain is Chaperone protein DnaJ 2 from Nocardia farcinica (strain IFM 10152).